Here is a 485-residue protein sequence, read N- to C-terminus: Glutamate--tRNA ligase (485 aa).

The 'HIGH' region signature appears at 12 to 22 (PSPTGYMHIGN). A 'KMSKS' region motif is present at residues 253–257 (KLSKR). Lys256 is an ATP binding site.

It belongs to the class-I aminoacyl-tRNA synthetase family. Glutamate--tRNA ligase type 1 subfamily. Monomer.

The protein resides in the cytoplasm. The catalysed reaction is tRNA(Glu) + L-glutamate + ATP = L-glutamyl-tRNA(Glu) + AMP + diphosphate. Its function is as follows. Catalyzes the attachment of glutamate to tRNA(Glu) in a two-step reaction: glutamate is first activated by ATP to form Glu-AMP and then transferred to the acceptor end of tRNA(Glu). In Clostridium acetobutylicum (strain ATCC 824 / DSM 792 / JCM 1419 / IAM 19013 / LMG 5710 / NBRC 13948 / NRRL B-527 / VKM B-1787 / 2291 / W), this protein is Glutamate--tRNA ligase.